A 272-amino-acid chain; its full sequence is Carbonic anhydrase (272 aa).

The Zn(2+) site is built by C39, H98, and C101.

This sequence belongs to the beta-class carbonic anhydrase family. In terms of assembly, a hexamer formed by a trimer of dimers. Purified from carboxysomes with the both RuBisCO subunits and the full-length form of CcmM, probably interacts with the N-terminus of CcmM. It depends on Zn(2+) as a cofactor.

The protein resides in the carboxysome. It catalyses the reaction hydrogencarbonate + H(+) = CO2 + H2O. Its function is as follows. Reversible hydration of carbon dioxide. Essential to photosynthetic carbon dioxide fixation, supplies CO(2) to RuBisCO (ribulose bisphosphate carboxylase, rbcL-rbcS) in the carboxysome. Loss of activity results in limitation of CO(2) availability to RuBisCO located in the cytoplasm. The protein is Carbonic anhydrase of Synechococcus elongatus (strain ATCC 33912 / PCC 7942 / FACHB-805) (Anacystis nidulans R2).